Here is a 1825-residue protein sequence, read N- to C-terminus: Proteasome activator complex subunit 4B (1825 aa).

HEAT repeat units lie at residues proline 458–cysteine 502, asparagine 981–glycine 1020, tyrosine 1162–arginine 1200, aspartate 1336–histidine 1374, proline 1618–phenylalanine 1656, and glutamate 1662–leucine 1700. Residues alanine 1632 to lysine 1720 form a bromodomain-like (BRDL) region.

Belongs to the BLM10 family. As to quaternary structure, homodimer. Interacts with the 20S and 26S proteasomes.

The protein localises to the cytoplasm. It is found in the cytosol. It localises to the nucleus. Its subcellular location is the nucleus speckle. Its function is as follows. Associated component of the proteasome that specifically recognizes acetylated histones and promotes ATP- and ubiquitin-independent degradation of core histones during DNA damage response. Recognizes and binds acetylated histones via its bromodomain-like (BRDL) region and activates the proteasome by opening the gated channel for substrate entry. Binds to the core proteasome via its C-terminus, which occupies the same binding sites as the proteasomal ATPases, opening the closed structure of the proteasome via an active gating mechanism. involved in DNA damage response in somatic cells: binds to acetylated histones and promotes degradation of histones. The polypeptide is Proteasome activator complex subunit 4B (psme4b) (Danio rerio (Zebrafish)).